Here is a 75-residue protein sequence, read N- to C-terminus: Probable protein BRICK1-A (75 aa).

The stretch at 41 to 72 forms a coiled coil; the sequence is MSCRSRLATLNEKLTALERRIEYIEARVTKGE.

It belongs to the BRK1 family.

It localises to the cytoplasm. The protein resides in the cytoskeleton. Involved in regulation of actin and microtubule organization. Part of a WAVE complex that activates the Arp2/3 complex. The protein is Probable protein BRICK1-A (brk1-a) of Xenopus laevis (African clawed frog).